Reading from the N-terminus, the 316-residue chain is E3 ubiquitin-protein ligase rnf146 (316 aa).

The RING-type zinc finger occupies 36 to 74; the sequence is CAICLQTCVHPVSLPCKHIFCYLCVKGASWLGRRCALCR. The WWE domain occupies 91 to 167; that stretch reads EELKSASRGN…EHGRRRKIKR (77 aa). Tyr-107, Arg-110, Trp-114, Tyr-144, Gln-153, Arg-163, and Lys-175 together coordinate a glycoprotein. The segment at 257–316 is disordered; it reads GRNNIGEGEEGQPLINARMPAPSALLEESEPSDSNDHGSPTLQHNSLLVPQSNRLPFGNP. The segment covering 293-310 has biased composition (polar residues); it reads HGSPTLQHNSLLVPQSNR.

The protein localises to the cytoplasm. It localises to the cytosol. Its subcellular location is the nucleus. The enzyme catalyses S-ubiquitinyl-[E2 ubiquitin-conjugating enzyme]-L-cysteine + [acceptor protein]-L-lysine = [E2 ubiquitin-conjugating enzyme]-L-cysteine + N(6)-ubiquitinyl-[acceptor protein]-L-lysine.. Its pathway is protein modification; protein ubiquitination. In terms of biological role, E3 ubiquitin-protein ligase that specifically binds poly-ADP-ribosylated proteins and mediates their ubiquitination and subsequent degradation. May regulate many important biological processes, such as cell survival and DNA damage response. Acts as an activator of the Wnt signaling pathway by mediating the ubiquitination of poly-ADP-ribosylated proteins. Neuroprotective protein. Protects against cell death induced by DNA damaging agents and rescues cells from G1 arrest. Promotes cell survival after gamma-irradiation. Facilitates DNA repair. The protein is E3 ubiquitin-protein ligase rnf146 (rnf146) of Xenopus tropicalis (Western clawed frog).